The sequence spans 478 residues: Violaxanthin de-epoxidase, chloroplastic (478 aa).

Positions 388–453 (LVERLEKKVE…RELSKEEMDV (66 aa)) form a coiled coil.

This sequence belongs to the calycin superfamily. Lipocalin family.

The protein localises to the plastid. Its subcellular location is the chloroplast thylakoid membrane. The enzyme catalyses all-trans-violaxanthin + 2 L-ascorbate = all-trans-zeaxanthin + 2 L-dehydroascorbate + 2 H2O. Part of the xanthophyll (or violaxanthin) cycle for controlling the concentration of zeaxanthin in chloroplasts. Catalyzes the two-step mono de-epoxidation reaction. Stereospecific for all-trans xanthophylls. Zeaxanthin induces the dissipation of excitation energy in the chlorophyll of the light-harvesting protein complex of photosystem II. The polypeptide is Violaxanthin de-epoxidase, chloroplastic (VDE1) (Nicotiana tabacum (Common tobacco)).